The primary structure comprises 526 residues: Na(+)/H(+) antiporter NhaB (526 aa).

12 helical membrane passes run 25–45 (ILLF…IAGW), 52–72 (IFTL…LLAI), 89–109 (LVAN…IYFM), 130–164 (LSLA…FYAI), 204–224 (LMMH…VGEP), 242–262 (IRMS…CVLV), 307–327 (IALW…LIGL), 350–370 (QEAL…AVII), 391–411 (LALF…VFVG), 448–468 (VATP…LAPL), 479–499 (MALP…EMLL), and 505–525 (WFYQ…LPVL).

The protein belongs to the NhaB Na(+)/H(+) (TC 2.A.34) antiporter family.

Its subcellular location is the cell inner membrane. The enzyme catalyses 2 Na(+)(in) + 3 H(+)(out) = 2 Na(+)(out) + 3 H(+)(in). Na(+)/H(+) antiporter that extrudes sodium in exchange for external protons. This is Na(+)/H(+) antiporter NhaB from Aeromonas hydrophila subsp. hydrophila (strain ATCC 7966 / DSM 30187 / BCRC 13018 / CCUG 14551 / JCM 1027 / KCTC 2358 / NCIMB 9240 / NCTC 8049).